The following is a 61-amino-acid chain: Small ribosomal subunit protein uS14 (61 aa).

4 residues coordinate Zn(2+): Cys-24, Cys-27, Cys-40, and Cys-43.

It belongs to the universal ribosomal protein uS14 family. Zinc-binding uS14 subfamily. As to quaternary structure, part of the 30S ribosomal subunit. Contacts proteins S3 and S10. Zn(2+) is required as a cofactor.

Its function is as follows. Binds 16S rRNA, required for the assembly of 30S particles and may also be responsible for determining the conformation of the 16S rRNA at the A site. The chain is Small ribosomal subunit protein uS14 from Mycoplasma mobile (strain ATCC 43663 / 163K / NCTC 11711) (Mesomycoplasma mobile).